A 193-amino-acid chain; its full sequence is uncharacterized protein (193 aa).

This is an uncharacterized protein from Methanocaldococcus jannaschii (strain ATCC 43067 / DSM 2661 / JAL-1 / JCM 10045 / NBRC 100440) (Methanococcus jannaschii).